We begin with the raw amino-acid sequence, 312 residues long: Methionyl-tRNA formyltransferase (312 aa).

109-112 (SLLP) is a binding site for (6S)-5,6,7,8-tetrahydrofolate.

The protein belongs to the Fmt family.

The catalysed reaction is L-methionyl-tRNA(fMet) + (6R)-10-formyltetrahydrofolate = N-formyl-L-methionyl-tRNA(fMet) + (6S)-5,6,7,8-tetrahydrofolate + H(+). In terms of biological role, attaches a formyl group to the free amino group of methionyl-tRNA(fMet). The formyl group appears to play a dual role in the initiator identity of N-formylmethionyl-tRNA by promoting its recognition by IF2 and preventing the misappropriation of this tRNA by the elongation apparatus. In Anaeromyxobacter dehalogenans (strain 2CP-1 / ATCC BAA-258), this protein is Methionyl-tRNA formyltransferase.